Consider the following 59-residue polypeptide: Large ribosomal subunit protein bL33 (59 aa).

The interval 26 to 59 (RYTTTKNKKNNTERLVLKKYNPNLKKHTEHKEIK) is disordered.

This sequence belongs to the bacterial ribosomal protein bL33 family.

In Chlorobium phaeobacteroides (strain BS1), this protein is Large ribosomal subunit protein bL33.